Consider the following 314-residue polypeptide: Olfactory receptor 1468 (314 aa).

Residues 1–25 (MTEENQTVISQFLLLGLPIPSEHQH) lie on the Extracellular side of the membrane. N-linked (GlcNAc...) asparagine glycosylation occurs at N5. A helical membrane pass occupies residues 26 to 49 (VFYALFLSMYLTTVLGNLIIIILI). The Cytoplasmic portion of the chain corresponds to 50–57 (HLDSHLHT). Residues 58-79 (PMYLFLSNLSFSDLCFSSVTMP) traverse the membrane as a helical segment. The Extracellular segment spans residues 80–100 (KLLQNMQSQVPSIPFAGCLTQ). A disulfide bridge links C97 with C189. The chain crosses the membrane as a helical span at residues 101–120 (LYFYLYFADLESFLLVAMAY). Over 121–139 (DRYVAICFPLHYMSIMSPK) the chain is Cytoplasmic. Residues 140–158 (LCVSLVVLSWVLTTFHAML) traverse the membrane as a helical segment. Over 159 to 196 (HTLLMARLSFCADNMIPHFFCDISPLLKLSCSDTHVNE) the chain is Extracellular. A helical membrane pass occupies residues 197–219 (LVIFVMGGLVIVIPFVLIIVSYA). The Cytoplasmic portion of the chain corresponds to 220–236 (RVVASILKVPSVRGIHK). A helical membrane pass occupies residues 237–260 (IFSTCGSHLSVVSLFYGTIIGLYL). The Extracellular segment spans residues 261–272 (CPSANNSTVKET). Residues 273–292 (VMAMMYTVVTPMLNPFIYSL) traverse the membrane as a helical segment. Over 293 to 314 (RNRDMKEALIRVLCKKKITFCL) the chain is Cytoplasmic.

It belongs to the G-protein coupled receptor 1 family. In terms of tissue distribution, olfactory epithelium.

Its subcellular location is the cell membrane. Functionally, odorant receptor. The protein is Olfactory receptor 1468 (Olr1468) of Rattus norvegicus (Rat).